A 242-amino-acid polypeptide reads, in one-letter code: Probable inactive serine protease 58 (242 aa).

Residues 1-17 (MNLILLWALLNLPVALT) form the signal peptide. The 223-residue stretch at 18–240 (FDPNYKDDIT…YIPWIENTIQ (223 aa)) folds into the Peptidase S1 domain. 4 disulfide bridges follow: Cys-41-Cys-57, Cys-134-Cys-202, Cys-166-Cys-181, and Cys-192-Cys-216. N-linked (GlcNAc...) asparagine glycosylation is present at Asn-157.

It belongs to the peptidase S1 family.

It localises to the secreted. The sequence is that of Probable inactive serine protease 58 (PRSS58) from Bos taurus (Bovine).